The primary structure comprises 356 residues: DNA polymerase IV (356 aa).

One can recognise a UmuC domain in the interval 1-188 (MDTSRKIIHI…IPVTKFYGVG (188 aa)). Residues aspartate 11 and aspartate 106 each contribute to the Mg(2+) site. Residue glutamate 107 is part of the active site.

Belongs to the DNA polymerase type-Y family. As to quaternary structure, monomer. Mg(2+) is required as a cofactor.

It is found in the cytoplasm. The catalysed reaction is DNA(n) + a 2'-deoxyribonucleoside 5'-triphosphate = DNA(n+1) + diphosphate. Its function is as follows. Poorly processive, error-prone DNA polymerase involved in untargeted mutagenesis. Copies undamaged DNA at stalled replication forks, which arise in vivo from mismatched or misaligned primer ends. These misaligned primers can be extended by PolIV. Exhibits no 3'-5' exonuclease (proofreading) activity. May be involved in translesional synthesis, in conjunction with the beta clamp from PolIII. The polypeptide is DNA polymerase IV (Listeria monocytogenes serovar 1/2a (strain ATCC BAA-679 / EGD-e)).